Consider the following 342-residue polypeptide: MVQNIAILGASGYTGAELVRLIATHPSMRIVALSGDRKAGMAMSEVFPFLRHLDLPRLQKIDEINFSNVDLAFCALPHATSQEVISALPRDLKIVDLSADFRLRDPAAYETWYGKPHSAPELQKEAVYGLTEFYRDEIRGARLVAGTGCNAATGQYAIRPLIEAGVIDLDDILIDLKAGVSGAGRSLKENLLHAELSEGTHAYSAGGTHRHLGEFDQEFSKIAGRPVQVRFTPHLTPMNRGILASVHVKGDPQAVHRALADRYLTETFLEVLPFGALPSTRDIRGSNYVHIGVIGDRIPGCALVVAVLDNLCKGSSGQAIQNANLMLGLDEAAGLRLAPVFP.

The active site involves Cys149.

This sequence belongs to the NAGSA dehydrogenase family. Type 1 subfamily.

The protein localises to the cytoplasm. It carries out the reaction N-acetyl-L-glutamate 5-semialdehyde + phosphate + NADP(+) = N-acetyl-L-glutamyl 5-phosphate + NADPH + H(+). The protein operates within amino-acid biosynthesis; L-arginine biosynthesis; N(2)-acetyl-L-ornithine from L-glutamate: step 3/4. In terms of biological role, catalyzes the NADPH-dependent reduction of N-acetyl-5-glutamyl phosphate to yield N-acetyl-L-glutamate 5-semialdehyde. The chain is N-acetyl-gamma-glutamyl-phosphate reductase from Cereibacter sphaeroides (strain ATCC 17025 / ATH 2.4.3) (Rhodobacter sphaeroides).